The following is a 754-amino-acid chain: 5-methyltetrahydropteroyltriglutamate--homocysteine methyltransferase (754 aa).

5-methyltetrahydropteroyltri-L-glutamate contacts are provided by residues 16 to 19 and Lys-114; that span reads RELK. L-homocysteine contacts are provided by residues 430 to 432 and Glu-483; that span reads IGS. Residues 430–432 and Glu-483 contribute to the L-methionine site; that span reads IGS. 5-methyltetrahydropteroyltri-L-glutamate is bound by residues 514-515 and Trp-560; that span reads RC. Residue Asp-598 coordinates L-homocysteine. Asp-598 contacts L-methionine. Glu-604 provides a ligand contact to 5-methyltetrahydropteroyltri-L-glutamate. Positions 640, 642, and 664 each coordinate Zn(2+). His-693 functions as the Proton donor in the catalytic mechanism. Cys-725 lines the Zn(2+) pocket.

This sequence belongs to the vitamin-B12 independent methionine synthase family. The cofactor is Zn(2+).

It carries out the reaction 5-methyltetrahydropteroyltri-L-glutamate + L-homocysteine = tetrahydropteroyltri-L-glutamate + L-methionine. It participates in amino-acid biosynthesis; L-methionine biosynthesis via de novo pathway; L-methionine from L-homocysteine (MetE route): step 1/1. Its function is as follows. Catalyzes the transfer of a methyl group from 5-methyltetrahydrofolate to homocysteine resulting in methionine formation. This is 5-methyltetrahydropteroyltriglutamate--homocysteine methyltransferase from Aeromonas salmonicida (strain A449).